The sequence spans 404 residues: uncharacterized protein (404 aa).

4 residues coordinate [4Fe-4S] cluster: Cys-69, Cys-75, Cys-78, and Cys-166. S-adenosyl-L-methionine-binding residues include Gln-226, Tyr-253, Glu-274, and Asp-334. Cys-361 acts as the Nucleophile in catalysis.

This sequence belongs to the class I-like SAM-binding methyltransferase superfamily. RNA M5U methyltransferase family.

This is an uncharacterized protein from Treponema denticola (strain ATCC 35405 / DSM 14222 / CIP 103919 / JCM 8153 / KCTC 15104).